The primary structure comprises 401 residues: tRNA N6-adenosine threonylcarbamoyltransferase (401 aa).

Fe cation contacts are provided by His-111 and His-115. Substrate-binding positions include 191 to 195, Asp-223, Gly-236, and Asn-336; that span reads LASGG. Asp-364 serves as a coordination point for Fe cation.

This sequence belongs to the KAE1 / TsaD family. Fe(2+) is required as a cofactor.

The protein resides in the cytoplasm. The catalysed reaction is L-threonylcarbamoyladenylate + adenosine(37) in tRNA = N(6)-L-threonylcarbamoyladenosine(37) in tRNA + AMP + H(+). In terms of biological role, required for the formation of a threonylcarbamoyl group on adenosine at position 37 (t(6)A37) in tRNAs that read codons beginning with adenine. Is involved in the transfer of the threonylcarbamoyl moiety of threonylcarbamoyl-AMP (TC-AMP) to the N6 group of A37, together with TsaE and TsaB. TsaD likely plays a direct catalytic role in this reaction. The chain is tRNA N6-adenosine threonylcarbamoyltransferase from Tropheryma whipplei (strain TW08/27) (Whipple's bacillus).